Here is a 592-residue protein sequence, read N- to C-terminus: Craniofacial development protein 2 (592 aa).

Residues 1-16 (MEEFDSKDISTSKDED) are compositionally biased toward basic and acidic residues. 2 disordered regions span residues 1–225 (MEEF…KGQS) and 499–592 (VTNE…DCNN). The span at 25-42 (HEDDINELVKEDEVDGEE) shows a compositional bias: acidic residues. 2 stretches are compositionally biased toward basic and acidic residues: residues 78 to 108 (SRESGGRIIEKEDAAAEQEKGAESEDARQEE) and 147 to 162 (KVEELEKPKKAEEVKL). Polar residues predominate over residues 175 to 184 (LTQQGRLSGR). 4 stretches are compositionally biased toward basic and acidic residues: residues 185–207 (TSEDEPRRSEGVQHATGEERRAD), 508–523 (EEAKSVLKQNEKEKPE), 552–562 (SVFKQDEKDKP), and 580–592 (EKCDLEKKKDCNN). The tract at residues 499–578 (VTNEEDATNE…SVPSLPAGSG (80 aa)) is hydrophilic.

Post-translationally, phosphorylated by CK2 (casein kinase II) in vitro. As to expression, expressed in liver and lung with higher expression in brain.

Its subcellular location is the cytoplasm. The protein localises to the nucleus. In Bos taurus (Bovine), this protein is Craniofacial development protein 2 (CFDP2).